A 314-amino-acid chain; its full sequence is Pseudouridine-5'-phosphate glycosidase (314 aa).

The Proton donor role is filled by glutamate 30. Positions 91 and 111 each coordinate substrate. Aspartate 143 contributes to the Mn(2+) binding site. Substrate is bound at residue 145 to 147 (SAD). The active-site Nucleophile is lysine 164.

The protein belongs to the pseudouridine-5'-phosphate glycosidase family. Homotrimer. The cofactor is Mn(2+).

It catalyses the reaction D-ribose 5-phosphate + uracil = psi-UMP + H2O. Functionally, catalyzes the reversible cleavage of pseudouridine 5'-phosphate (PsiMP) to ribose 5-phosphate and uracil. Functions biologically in the cleavage direction, as part of a pseudouridine degradation pathway. The chain is Pseudouridine-5'-phosphate glycosidase from Cupriavidus pinatubonensis (strain JMP 134 / LMG 1197) (Cupriavidus necator (strain JMP 134)).